The chain runs to 1001 residues: X-linked retinitis pigmentosa GTPase regulator (1001 aa).

6 RCC1 repeats span residues asparagine 54–threonine 105, glycine 106–aspartate 158, glycine 159–aspartate 208, glycine 209–lysine 261, valine 262–leucine 313, and glycine 314–proline 367. The interval serine 404–proline 428 is disordered. Phosphoserine is present on serine 518. Composition is skewed to basic and acidic residues over residues lysine 631–lysine 641 and glutamate 659–serine 671. Disordered regions lie at residues lysine 631–arginine 738, asparagine 794–glutamate 869, proline 902–serine 925, and glycine 962–leucine 1001. Acidic residues-rich tracts occupy residues serine 679–methionine 691 and glutamate 717–threonine 731. Composition is skewed to basic and acidic residues over residues asparagine 794–alanine 818, glutamate 847–valine 857, and proline 902–lysine 911. The span at glutamine 976–leucine 1001 shows a compositional bias: polar residues. Cysteine 998 carries the post-translational modification Cysteine methyl ester. Cysteine 998 is lipidated: S-geranylgeranyl cysteine. Residues threonine 999–leucine 1001 constitute a propeptide, removed in mature form.

Interacts with SPATA7. Interacts with PDE6D. Interacts with RPGRIP1 and RPGRIP1L; PDE6D, RPGRIP1 and RPGRIP1L may compete for the same binding sites. Interacts with NPM1. Interacts with PDE6D. Isoform 5 interacts (via N-terminus) with SMC1A and SMC3. Isoform 5 interacts with CEP290. Interacts with WHRN. Interacts with RAB37 and RAB8A (in GDP-bound forms); functions as GEF for RAB37 and RAB8A. Prenylated. Expressed in the retina (at protein level). Located mainly in the connecting cilia between the outer segment and inner segment and also observed in the outer plexiform layer, inner plexiform layer, and ganglion cell layer of the retinas. Isoform 1: Expressed in the retina (at protein level). Isoform 5: Expressed in the retina (at protein level). Expressed in the brain. Expressed in the testis (at protein level). Expressed in kidney (at protein level).

It is found in the golgi apparatus. The protein resides in the cytoplasm. Its subcellular location is the cytoskeleton. The protein localises to the microtubule organizing center. It localises to the centrosome. It is found in the cell projection. The protein resides in the cilium. Its subcellular location is the cilium basal body. The protein localises to the cilium axoneme. It localises to the flagellum axoneme. Functionally, acts as a guanine-nucleotide releasing factor (GEF) for RAB8A and RAB37 by promoting the conversion of inactive RAB-GDP to the active form RAB-GTP. GEF activity towards RAB8A may facilitate ciliary trafficking by modulating ciliary intracellular localization of RAB8A. GEF activity towards RAB37 maintains autophagic homeostasis and retinal function. Involved in photoreceptor integrity. May control cilia formation by regulating actin stress filaments and cell contractility. May be involved in microtubule organization and regulation of transport in primary cilia. In terms of biological role, isoform 5 may play a critical role in spermatogenesis and in intraflagellar transport processes. The protein is X-linked retinitis pigmentosa GTPase regulator of Mus musculus (Mouse).